A 496-amino-acid polypeptide reads, in one-letter code: Glutathione reductase, cytosolic (496 aa).

Positions 32, 33, 52, 69, 70, and 78 each coordinate FAD. Ser-32 contributes to the glutathione binding site. Cys-70 and Cys-75 are disulfide-bonded. Tyr-127 contacts glutathione. Residue Gly-143 participates in FAD binding. NADP(+) is bound by residues Gly-208, Ile-211, Glu-214, Arg-231, Arg-237, and Gly-294. Asp-335 and Thr-343 together coordinate FAD. Ala-373 is an NADP(+) binding site. His-469 lines the FAD pocket. His-469 acts as the Proton acceptor in catalysis.

Belongs to the class-I pyridine nucleotide-disulfide oxidoreductase family. As to quaternary structure, homodimer. The cofactor is FAD.

The protein resides in the cytoplasm. The enzyme catalyses 2 glutathione + NADP(+) = glutathione disulfide + NADPH + H(+). In terms of biological role, catalyzes the reduction of glutathione disulfide (GSSG) to reduced glutathione (GSH). Constitutes the major mechanism to maintain a high GSH:GSSG ratio in the cytosol. The protein is Glutathione reductase, cytosolic (GRC2) of Oryza sativa subsp. japonica (Rice).